We begin with the raw amino-acid sequence, 402 residues long: MTDDLTGALTQPPLGRTVRAVADRELGTHLLETRGIHWIHAANGDPYATVLRGQADDPYPAYERVRARGALSFSPTGSWVTADHALAASILCSTDFGVSGADGVPVPQQVLSYGEGCPLEREQVLPAAGDVPEGGQRAVVEGIHRETLEGLAPDPSASYAFELLGGFVRPAVTAAAAAVLGVPADRRADFADLLERLRPLSDSLLAPQSLRTVRAADGALAELTALLADSDDSPGALLSALGVTAAVQLTGNAVLALLAHPEQWRELCDRPGLAAAAVEETLRYDPPVQLDARVVRGETELAGRRLPAGAHVVVLTAATGRDPEVFTDPERFDLARPDAAAHLALHPAGPYGPVASLVRLQAEVALRTLAGRFPGLRQAGDVLRPRRAPVGRGPLSVPVSSS.

The protein belongs to the cytochrome P450 family. In terms of assembly, forms a complex with DesVII.

Its pathway is antibiotic biosynthesis. Functionally, involved in the biosynthesis of the macrolide antibiotics methymycin, neomethymycin, narbomycin, and pikromycin. DesVIII assists the folding of the DesVII polypeptide. However, unlike chaperones, it remains bound to DesVII during catalysis, forming a tight DesVII/DesVIII complex. Although the formation of the DesVII/DesVIII complex is essential for the catalytic activity, DesVIII is unlikely to be involved in catalysis directly. The protein is Protein DesVIII of Streptomyces venezuelae.